The primary structure comprises 428 residues: Stabilizer of axonemal microtubules 4 (428 aa).

The disordered stretch occupies residues 201 to 231; that stretch reads AKEETGFTEESNKNPIVFQPPSQALPGDPVL.

In terms of assembly, microtubule inner protein component of sperm flagellar doublet microtubules. Interacts with PPP1CA.

Its subcellular location is the cell projection. It is found in the cilium. The protein localises to the cytoplasm. The protein resides in the cytoskeleton. It localises to the flagellum axoneme. The polypeptide is Stabilizer of axonemal microtubules 4 (Bos taurus (Bovine)).